The following is a 264-amino-acid chain: MAVGKNKGLSKGGKKGVKKKIVDPFTRKDWYDVKAPSMFTKRQVGTTLVNRTQGTKIASEGLKGRVFEVSLADLQADTDAERSFRKFRLIAEDVQGRNVLCNFHGMDLTTDKLRWMVKKWQTLVEANIDVKTTDGYLLRVFCIGFTNKDSLSQRKTCYAQHTQVRAIRKKMCEIITRDVTNSELREVVNKLIPDSIAKDIEKACHGIYPLRDVCIRKVKVLKRPRFEISKLMELHGEGGSGKRGEAGDKSERPEGYEPPVQESV.

Positions 236 to 255 (GEGGSGKRGEAGDKSERPEG) are enriched in basic and acidic residues. The disordered stretch occupies residues 236–264 (GEGGSGKRGEAGDKSERPEGYEPPVQESV).

The protein belongs to the eukaryotic ribosomal protein eS1 family. As to quaternary structure, component of the small ribosomal subunit. Mature ribosomes consist of a small (40S) and a large (60S) subunit. The 40S subunit contains about 33 different proteins and 1 molecule of RNA (18S). The 60S subunit contains about 49 different proteins and 3 molecules of RNA (28S, 5.8S and 5S).

Its subcellular location is the cytoplasm. The chain is Small ribosomal subunit protein eS1 from Spodoptera frugiperda (Fall armyworm).